The primary structure comprises 266 residues: Undecaprenyl-diphosphatase (266 aa).

8 helical membrane-spanning segments follow: residues 1–21, 39–59, 87–107, 114–134, 149–169, 183–203, 218–238, and 246–266; these read MDTF…FLPI, QGLS…VIYF, WWII…KDFI, AEVI…ADKM, ALLI…RSGA, AAAR…AILV, ALIL…HYFL, and MTPF…FIFF.

Belongs to the UppP family.

It is found in the cell inner membrane. The enzyme catalyses di-trans,octa-cis-undecaprenyl diphosphate + H2O = di-trans,octa-cis-undecaprenyl phosphate + phosphate + H(+). In terms of biological role, catalyzes the dephosphorylation of undecaprenyl diphosphate (UPP). Confers resistance to bacitracin. The protein is Undecaprenyl-diphosphatase of Shewanella baltica (strain OS223).